The following is a 126-amino-acid chain: Large ribosomal subunit protein bL17 (126 aa).

It belongs to the bacterial ribosomal protein bL17 family. In terms of assembly, part of the 50S ribosomal subunit. Contacts protein L32.

This is Large ribosomal subunit protein bL17 from Xylella fastidiosa (strain Temecula1 / ATCC 700964).